Consider the following 633-residue polypeptide: Cyclic GMP-AMP synthase-like receptor 1 (633 aa).

3 disordered regions span residues 23-80 (KVHG…HPHT), 107-214 (FKGP…TDPF), and 250-276 (REDD…RPSS). Basic and acidic residues predominate over residues 29–67 (KQHESAHPPRERHTERTATKRSDETKTASRPTASHEGKT). The segment covering 68–80 (HTTNPRGQVHPHT) has biased composition (polar residues). 3 stretches are compositionally biased toward basic and acidic residues: residues 125–143 (RKPE…DHRT), 176–194 (RKPD…DHRT), and 250–274 (REDD…DDRP). Mg(2+)-binding residues include E353, D355, and D455.

This sequence belongs to the mab-21 family. Mg(2+) is required as a cofactor. The cofactor is Mn(2+).

The enzyme catalyses UTP + ATP = 2',3'-cUAMP + 2 diphosphate. Functionally, nucleotidyltransferase that catalyzes the formation of cyclic UMP-AMP (2',3'-cUAMP) from ATP and UTP and plays a key role in innate immunity. Acts as a key sensor of double-stranded DNA (dsDNA), the presence of dsDNA in the cytoplasm being a danger signal that triggers the immune responses. Directly binds dsDNA, activating the nucleotidyltransferase activity, leading to synthesis of 2',3'-cUAMP, a second messenger that binds to and activates Sting, thereby triggering the immune response via activation of the NF-kappa-B transcription factor. This chain is Cyclic GMP-AMP synthase-like receptor 1, found in Crassostrea virginica (Eastern oyster).